The following is a 373-amino-acid chain: Thyroid hormone receptor beta-A (373 aa).

The interval 1 to 18 is modulating; sequence MPSSMSGYIPSYLDKDEL. 2 consecutive NR C4-type zinc fingers follow at residues 19-39 and 57-81; these read CVVCGDKATGYHYRCITCEGC and CKYEGKCVIDKVTRNQCQECRFKKC. Residues 19-93 constitute a DNA-binding region (nuclear receptor); sequence CVVCGDKATG…VGMATDLVLD (75 aa). Residues 129 to 373 form the NR LBD domain; the sequence is EEWELIQVVT…PPLFLEVFED (245 aa).

It belongs to the nuclear hormone receptor family. NR1 subfamily.

The protein localises to the nucleus. High affinity receptor for triiodothyronine (T3). The polypeptide is Thyroid hormone receptor beta-A (thrb-a) (Xenopus laevis (African clawed frog)).